A 371-amino-acid polypeptide reads, in one-letter code: Leu/Ile/Val-binding protein homolog 2 (371 aa).

An N-terminal signal peptide occupies residues 1-23; it reads MKKSLFCGVCLCALVAMGGTSFA.

Belongs to the leucine-binding protein family.

Component of an amino-acid transport system. The protein is Leu/Ile/Val-binding protein homolog 2 of Brucella abortus (strain 2308).